Consider the following 485-residue polypeptide: GlcNAc-binding protein A (485 aa).

The first 29 residues, 1–29, serve as a signal peptide directing secretion; sequence MKKQPQKTLLAIALSVVSGTAMSHGYVSA. Positions 30–200 constitute a Chitin-binding type-4 domain; it reads VENGVAEARV…SFYNVIDVKF (171 aa). In terms of domain architecture, Chitin-binding type-3 spans 437–478; it reads AGTKVLASDGAIYQCKPFPYSGYCVQWTPTATQYQPGTGSHW.

The protein belongs to the GbpA family.

Its subcellular location is the secreted. Its function is as follows. Probably interacts with GlcNAc residues. May promote attachment to both epithelial cell surfaces and chitin. In Vibrio vulnificus (strain YJ016), this protein is GlcNAc-binding protein A.